Consider the following 156-residue polypeptide: CKLF-like MARVEL transmembrane domain-containing protein 5 (156 aa).

Positions 29-146 (FLSSLKGILL…DAFKIYRTEL (118 aa)) constitute an MARVEL domain. The next 4 helical transmembrane spans lie at 35–55 (GILLETELALTFIIFICFTAS), 56–76 (ISAYMAAALLEFLITLAFLFL), 93–113 (LDFLRCLSAIVIFLVVSFAAV), and 119–139 (AAIAAFVFGIILVSVFAYDAF).

This sequence belongs to the chemokine-like factor family.

Its subcellular location is the membrane. The protein is CKLF-like MARVEL transmembrane domain-containing protein 5 (Cmtm5) of Mus musculus (Mouse).